An 89-amino-acid polypeptide reads, in one-letter code: Small ribosomal subunit protein uS15 (89 aa).

Belongs to the universal ribosomal protein uS15 family. In terms of assembly, part of the 30S ribosomal subunit. Forms a bridge to the 50S subunit in the 70S ribosome, contacting the 23S rRNA.

In terms of biological role, one of the primary rRNA binding proteins, it binds directly to 16S rRNA where it helps nucleate assembly of the platform of the 30S subunit by binding and bridging several RNA helices of the 16S rRNA. Forms an intersubunit bridge (bridge B4) with the 23S rRNA of the 50S subunit in the ribosome. This Bacteroides fragilis (strain ATCC 25285 / DSM 2151 / CCUG 4856 / JCM 11019 / LMG 10263 / NCTC 9343 / Onslow / VPI 2553 / EN-2) protein is Small ribosomal subunit protein uS15.